Consider the following 506-residue polypeptide: Probable Xaa-Pro aminopeptidase BDCG_04966 (506 aa).

Mn(2+) is bound by residues Asp285, Asp296, Glu433, and Glu471.

It belongs to the peptidase M24B family. Requires Mn(2+) as cofactor.

The enzyme catalyses Release of any N-terminal amino acid, including proline, that is linked to proline, even from a dipeptide or tripeptide.. Its function is as follows. Catalyzes the removal of a penultimate prolyl residue from the N-termini of peptides. The protein is Probable Xaa-Pro aminopeptidase BDCG_04966 of Ajellomyces dermatitidis (strain ER-3 / ATCC MYA-2586) (Blastomyces dermatitidis).